We begin with the raw amino-acid sequence, 105 residues long: Extracellular guanyl-specific ribonuclease Fl1 (105 aa).

Cystine bridges form between C5–C101 and C23–C82. The active site involves H39. Residue E57 is the Proton acceptor of the active site. H90 functions as the Proton donor in the catalytic mechanism.

The protein belongs to the ribonuclease N1/T1 family.

The catalysed reaction is [RNA] containing guanosine + H2O = an [RNA fragment]-3'-guanosine-3'-phosphate + a 5'-hydroxy-ribonucleotide-3'-[RNA fragment].. This chain is Extracellular guanyl-specific ribonuclease Fl1, found in Gibberella baccata (Fusarium lateritium).